The primary structure comprises 195 residues: Early light-induced protein 1, chloroplastic (195 aa).

A chloroplast-targeting transit peptide spans 1-46 (MATASFNMQSVFAGGLTTRKINTNKLFSAGSFPNLKRNYPVGVRCM). The disordered stretch occupies residues 46 to 81 (MAEGGPTNEDSSPAPSTSAAQPLPKSPSPPPPMKPK). The segment covering 56 to 68 (SSPAPSTSAAQPL) has biased composition (low complexity). The segment covering 69–79 (PKSPSPPPPMK) has biased composition (pro residues). A run of 3 helical transmembrane segments spans residues 104–124 (LAMV…ENVL), 131–151 (GVSW…VPLF), and 175–195 (FAML…GTLV).

This sequence belongs to the ELIP/psbS family.

It is found in the plastid. The protein resides in the chloroplast thylakoid membrane. Functionally, prevents excess accumulation of free chlorophyll by inhibiting the entire chlorophyll biosynthesis pathway (e.g. 5-aminolevulinate synthesis and Mg-protoporphyrin IX chelatase activity), and hence prevent photooxidative stress. Probably involved in the integration of pigments into the mature light-harvesting pigment-protein complexes. Light-harvesting chlorophyll (LHC) a/b-binding protein required to ensure a high rate of chlorophyll accumulation during deetiolation in continuous high light. Involved in seed germination. May fulfill a photoprotective functions. The chain is Early light-induced protein 1, chloroplastic from Arabidopsis thaliana (Mouse-ear cress).